Reading from the N-terminus, the 422-residue chain is MNQCAKDITHEASSIPIDLQERYSHWKKNTKLLYDYLNTNSTKWPSLTCQFFPDLDTTSDEHRILLSSFTSSQKPEDETIYISKISTLGHIKWSSLNNFDMDEMEFKPENSTRFPSKHLVNDISIFFPNGECNRARYLPQNPDIIAGASSDGAIYIFDRTKHGSTRIRQSKISHPFETKLFGSHGVIQDVEAMDTSSADINEATSLAWNLQQEALLLSSHSNGQVQVWDIKQYSHENPIIDLPLVSINSDGTAVNDVTWMPTHDSLFAACTEGNAVSLLDLRTKKEKLQSNREKHDGGVNSCRFNYKNSLILASADSNGRLNLWDIRNMNKSPIATMEHGTSVSTLEWSPNFDTVLATAGQEDGLVKLWDTSCEETIFTHGGHMLGVNDISWDAHDPWLMCSVANDNSVHIWKPAGNLVGHS.

6 WD repeats span residues 127 to 158 (FPNG…YIFD), 198 to 238 (ADIN…HENP), 249 to 289 (SDGT…EKLQ), 294 to 334 (KHDG…KSPI), 338 to 379 (EHGT…TIFT), and 382 to 421 (GHML…LVGH).

Belongs to the WD repeat RBAP46/RBAP48/MSI1 family. Component of chromatin assembly factor 1 (CAF-1), composed of MSI1/p50, CAC2/p60 and CAC1/p90. Interacts with protein kinase NPR1. Interacts with RTT106.

It localises to the cytoplasm. The protein resides in the nucleus. Its function is as follows. Acts as a component of the histone chaperone complex chromatin assembly factor 1 (CAF-1), which assembles histone octamers onto DNA during replication and repair. CAF-1 performs the first step of the nucleosome assembly process, bringing newly synthesized histones H3 and H4 to replicating DNA; histones H2A/H2B can bind to this chromatin precursor subsequent to DNA replication to complete the histone octamer. Plays a role in the maintenance of heterochromatin. Independently, MSI1 is involved in regulation of the RAS/cAMP pathway via sequestration of NPR1. The sequence is that of Histone-binding protein MSI1 (MSI1) from Saccharomyces cerevisiae (strain ATCC 204508 / S288c) (Baker's yeast).